A 341-amino-acid chain; its full sequence is Biotin synthase (341 aa).

One can recognise a Radical SAM core domain in the interval 40–267 (AEIQVSTLLS…RSMVRLSAGR (228 aa)). Positions 55, 59, and 62 each coordinate [4Fe-4S] cluster. Cys99, Cys130, Cys190, and Arg262 together coordinate [2Fe-2S] cluster.

Belongs to the radical SAM superfamily. Biotin synthase family. Homodimer. It depends on [4Fe-4S] cluster as a cofactor. [2Fe-2S] cluster is required as a cofactor.

It carries out the reaction (4R,5S)-dethiobiotin + (sulfur carrier)-SH + 2 reduced [2Fe-2S]-[ferredoxin] + 2 S-adenosyl-L-methionine = (sulfur carrier)-H + biotin + 2 5'-deoxyadenosine + 2 L-methionine + 2 oxidized [2Fe-2S]-[ferredoxin]. It functions in the pathway cofactor biosynthesis; biotin biosynthesis; biotin from 7,8-diaminononanoate: step 2/2. Functionally, catalyzes the conversion of dethiobiotin (DTB) to biotin by the insertion of a sulfur atom into dethiobiotin via a radical-based mechanism. In Xylella fastidiosa (strain M12), this protein is Biotin synthase.